The primary structure comprises 130 residues: Ribosome-binding factor A (130 aa).

The tract at residues 111–130 is disordered; the sequence is RDLDDVGPGATSSDEDAEQR.

The protein belongs to the RbfA family. Monomer. Binds 30S ribosomal subunits, but not 50S ribosomal subunits or 70S ribosomes.

It is found in the cytoplasm. One of several proteins that assist in the late maturation steps of the functional core of the 30S ribosomal subunit. Associates with free 30S ribosomal subunits (but not with 30S subunits that are part of 70S ribosomes or polysomes). Required for efficient processing of 16S rRNA. May interact with the 5'-terminal helix region of 16S rRNA. This Xanthomonas oryzae pv. oryzae (strain MAFF 311018) protein is Ribosome-binding factor A.